We begin with the raw amino-acid sequence, 525 residues long: MPSAPSAAAPDTVLVVDFGAQYAQLIARRVREARVYSEIVPSTMPVAEMLAKNPAAIILSGGPSSVYAEGAPRLDREIFEAGVPVFGMCYGFQLMATTLGGTVDNTGAREYGRTPLHVSKSGSTLFEGTPDEQPVWMSHGDACSAAPEGFTVTASTDVVPVAAFENDEKRLYGVQYHPEVMHSTHGQQVLEHFLYRGAGLTPSWTTGNVIDEQVELIREQVGTRRAICGLSGGVDSAVAAALVQKAIGSQLTCVYVDHGLMRQGETEQVEKDFVAATGVQLKVVDAEERFLTALKGVSDPEEKRKIIGREFIRVFEQAQAEIIADEGPEVAFLVQGTLYPDVVESGGGTGTANIKSHHNVGGLPEDLEFELIEPLRKLFKDEVRMVGQELGLPDEIVQRQPFPGPGLGIRIVGEVTKERLDLLREADAIAREELTAAGLDREIWQCPVVLLADVRSVGVQGDGRTYGHPIVLRPVSSEDAMTADWSRLPYDTLAKISTRITNEVADVNRVVLDVTSKPPGTIEWE.

A Glutamine amidotransferase type-1 domain is found at 12-203 (TVLVVDFGAQ…LYRGAGLTPS (192 aa)). C89 functions as the Nucleophile in the catalytic mechanism. Residues H177 and E179 contribute to the active site. A GMPS ATP-PPase domain is found at 204–399 (WTTGNVIDEQ…LGLPDEIVQR (196 aa)). 231-237 (SGGVDSA) lines the ATP pocket.

Homodimer.

The catalysed reaction is XMP + L-glutamine + ATP + H2O = GMP + L-glutamate + AMP + diphosphate + 2 H(+). It functions in the pathway purine metabolism; GMP biosynthesis; GMP from XMP (L-Gln route): step 1/1. Its function is as follows. Catalyzes the synthesis of GMP from XMP. The polypeptide is GMP synthase [glutamine-hydrolyzing] (Streptomyces avermitilis (strain ATCC 31267 / DSM 46492 / JCM 5070 / NBRC 14893 / NCIMB 12804 / NRRL 8165 / MA-4680)).